A 370-amino-acid polypeptide reads, in one-letter code: MARGPGDTDMDEASADAAIPSSTPNPTVAFRCTHALSGHTKAVAAVKFSPDGSLLASGSADRTVALWDAATGARVNTLAGHSCGVSDVAWNPNGRYLATAADDHSLKLWDAETGACLRTLTGHTNYVFCCNFDGAAGHLLASGSFDETLRLWDVRSGRCLREVPAHSDPVTSAAFSYDGSMVVTSSLDGLIRLWDTQTGHCLKTLFDRDSPPVSFAAFTPNAKYVLCNTLDGRAKLWDYAAGRTRRTYAGGHVNTQFCISSGFLGGSSSASFDLGCSMVVTGSEDGSLAAYDISTGHVVGRGAAAAAAAEGGGDEGSAAAAAAGGVAGGHTAAVLSVNVHPSAPLVATGGHHPDNSVRVWAASRTEPAAA.

A disordered region spans residues 1–22 (MARGPGDTDMDEASADAAIPSS). 7 WD repeats span residues 38 to 77 (GHTKAVAAVKFSPDGSLLASGSADRTVALWDAATGARVNT), 80 to 119 (GHSCGVSDVAWNPNGRYLATAADDHSLKLWDAETGACLRT), 122 to 162 (GHTN…CLRE), 165 to 204 (AHSDPVTSAAFSYDGSMVVTSSLDGLIRLWDTQTGHCLKT), 208 to 247 (RDSPPVSFAAFTPNAKYVLCNTLDGRAKLWDYAAGRTRRT), 262 to 301 (GFLGGSSSASFDLGCSMVVTGSEDGSLAAYDISTGHVVGR), and 329 to 370 (GHTA…PAAA).

This sequence belongs to the WD repeat WDR5/wds family.

It is found in the nucleus. Part of a complex involved in 'Lys-4' histone H3 methylation. This is Protein Mut11 (Mut11) from Chlamydomonas reinhardtii (Chlamydomonas smithii).